The sequence spans 281 residues: CLA biosynthesis isomerase (281 aa).

It belongs to the ADC family.

Its subcellular location is the cytoplasm. The catalysed reaction is 10-oxo-(12Z)-octadecenoate = 10-oxo-(11E)-octadecenoate. It participates in lipid metabolism; fatty acid metabolism. Functionally, is involved in a saturation metabolic pathway of polyunsaturated fatty acids, that detoxifies unsaturated fatty acids and generates hydroxy fatty acids, oxo fatty acids, conjugated fatty acids such as conjugated linoleic acids (CLAs), and partially saturated trans-fatty acids as intermediates. CLA-DC catalyzes the migration of the carbon-carbon double bond in 10-oxo-(12Z)-octadecenoate to produce 10-oxo-(11E)-octadecenoate, during linoleate metabolism. As part of the gut microbiome, this enzyme modifies host fatty acid composition and is expected to improve human health by altering lipid metabolism related to the onset of metabolic syndrome. The protein is CLA biosynthesis isomerase of Lactiplantibacillus plantarum (Lactobacillus plantarum).